A 1047-amino-acid polypeptide reads, in one-letter code: Carbamoyl phosphate synthase large chain (1047 aa).

The segment at 1 to 398 (MPRRDDIHRI…ALMKAIASLD (398 aa)) is carboxyphosphate synthetic domain. Positions 129, 169, 175, 176, 208, 210, 215, 241, 242, 243, 284, and 296 each coordinate ATP. Residues 133–325 (YEFLKAMGEP…IARIAAKIAA (193 aa)) form the ATP-grasp 1 domain. Residues Gln284, Glu296, and Asn298 each contribute to the Mg(2+) site. Mn(2+) is bound by residues Gln284, Glu296, and Asn298. The segment at 399–539 (NAFSSNIRLH…YSTYEDEDET (141 aa)) is oligomerization domain. The interval 540–916 (PDLSGSIMII…ALRKSLQRSI (377 aa)) is carbamoyl phosphate synthetic domain. The region spanning 665–854 (SRVIEGLGIK…WVRLAVECMI (190 aa)) is the ATP-grasp 2 domain. Residues Arg701, Lys738, Leu740, Glu745, Gly770, Val771, His772, Ser773, Gln813, and Glu825 each contribute to the ATP site. Mg(2+) contacts are provided by Gln813, Glu825, and Asn827. Gln813, Glu825, and Asn827 together coordinate Mn(2+). An MGS-like domain is found at 910-1047 (KSLQRSISSV…REIGDYLQVS (138 aa)). Positions 916 to 1047 (ISSVLITVRD…REIGDYLQVS (132 aa)) are allosteric domain.

Belongs to the CarB family. Composed of two chains; the small (or glutamine) chain promotes the hydrolysis of glutamine to ammonia, which is used by the large (or ammonia) chain to synthesize carbamoyl phosphate. Tetramer of heterodimers (alpha,beta)4. Requires Mg(2+) as cofactor. It depends on Mn(2+) as a cofactor.

The enzyme catalyses hydrogencarbonate + L-glutamine + 2 ATP + H2O = carbamoyl phosphate + L-glutamate + 2 ADP + phosphate + 2 H(+). It catalyses the reaction hydrogencarbonate + NH4(+) + 2 ATP = carbamoyl phosphate + 2 ADP + phosphate + 2 H(+). Its pathway is amino-acid biosynthesis; L-arginine biosynthesis; carbamoyl phosphate from bicarbonate: step 1/1. It participates in pyrimidine metabolism; UMP biosynthesis via de novo pathway; (S)-dihydroorotate from bicarbonate: step 1/3. Large subunit of the glutamine-dependent carbamoyl phosphate synthetase (CPSase). CPSase catalyzes the formation of carbamoyl phosphate from the ammonia moiety of glutamine, carbonate, and phosphate donated by ATP, constituting the first step of 2 biosynthetic pathways, one leading to arginine and/or urea and the other to pyrimidine nucleotides. The large subunit (synthetase) binds the substrates ammonia (free or transferred from glutamine from the small subunit), hydrogencarbonate and ATP and carries out an ATP-coupled ligase reaction, activating hydrogencarbonate by forming carboxy phosphate which reacts with ammonia to form carbamoyl phosphate. The protein is Carbamoyl phosphate synthase large chain of Thermoplasma acidophilum (strain ATCC 25905 / DSM 1728 / JCM 9062 / NBRC 15155 / AMRC-C165).